We begin with the raw amino-acid sequence, 846 residues long: Translation initiation factor IF-2 (846 aa).

The interval 94–263 (QRSPEEIQAE…HGFQNPTGPV (170 aa)) is disordered. A compositionally biased stretch (basic and acidic residues) spans 96-135 (SPEEIQAEQKRELEERRAAENAARDKVEAEVRQRNEEQAR). Composition is skewed to low complexity over residues 136–148 (RQAAGSTAAAPAP) and 158–176 (AAPVAAPAPVVADAPASED). Basic and acidic residues-rich tracts occupy residues 177–206 (AAARAAERKKDETRRNESRTRDDDRRRGEA) and 230–239 (TTDEESDGAR). Basic residues predominate over residues 240–253 (RGRGGKSKLKKRNQ). The tr-type G domain maps to 346–513 (SRAPVVTVMG…AVLLQAEILE (168 aa)). A G1 region spans residues 355-362 (GHVDHGKT). Position 355-362 (355-362 (GHVDHGKT)) interacts with GTP. A G2 region spans residues 380–384 (GITQH). Positions 401–404 (DTPG) are G3. GTP-binding positions include 401 to 405 (DTPGH) and 455 to 458 (NKID). Positions 455-458 (NKID) are G4. Positions 491 to 493 (SAK) are G5.

This sequence belongs to the TRAFAC class translation factor GTPase superfamily. Classic translation factor GTPase family. IF-2 subfamily.

The protein resides in the cytoplasm. Functionally, one of the essential components for the initiation of protein synthesis. Protects formylmethionyl-tRNA from spontaneous hydrolysis and promotes its binding to the 30S ribosomal subunits. Also involved in the hydrolysis of GTP during the formation of the 70S ribosomal complex. The protein is Translation initiation factor IF-2 of Pseudomonas putida (strain ATCC 700007 / DSM 6899 / JCM 31910 / BCRC 17059 / LMG 24140 / F1).